The sequence spans 166 residues: uncharacterized protein (166 aa).

The disordered stretch occupies residues 25-116; the sequence is PEEPPLWVPP…QGADEVHSQH (92 aa). A Phosphoserine modification is found at S105.

This is an uncharacterized protein from Rattus norvegicus (Rat).